A 193-amino-acid polypeptide reads, in one-letter code: Peptidyl-tRNA hydrolase (193 aa).

TRNA is bound at residue Tyr15. His20 (proton acceptor) is an active-site residue. Positions 65, 67, and 113 each coordinate tRNA.

It belongs to the PTH family. As to quaternary structure, monomer.

The protein resides in the cytoplasm. It carries out the reaction an N-acyl-L-alpha-aminoacyl-tRNA + H2O = an N-acyl-L-amino acid + a tRNA + H(+). Functionally, hydrolyzes ribosome-free peptidyl-tRNAs (with 1 or more amino acids incorporated), which drop off the ribosome during protein synthesis, or as a result of ribosome stalling. In terms of biological role, catalyzes the release of premature peptidyl moieties from peptidyl-tRNA molecules trapped in stalled 50S ribosomal subunits, and thus maintains levels of free tRNAs and 50S ribosomes. In Ehrlichia ruminantium (strain Gardel), this protein is Peptidyl-tRNA hydrolase.